A 296-amino-acid polypeptide reads, in one-letter code: Large ribosomal subunit protein uL15m (296 aa).

A mitochondrion-targeting transit peptide spans Met1–Arg20. Residues Asn25–Arg59 are disordered.

Belongs to the universal ribosomal protein uL15 family. As to quaternary structure, component of the mitochondrial ribosome large subunit (39S) which comprises a 16S rRNA and about 50 distinct proteins.

It is found in the mitochondrion. This Danio rerio (Zebrafish) protein is Large ribosomal subunit protein uL15m (mrpl15).